We begin with the raw amino-acid sequence, 424 residues long: Putative fasciclin-like arabinogalactan protein 20 (424 aa).

The chain crosses the membrane as a helical span at residues 46–66 (LLTTFFLIFFVLDIDLVATSM). Residues 56-194 (VLDIDLVATS…YVVIYGSDEF (139 aa)) form the FAS1 1 domain. N-linked (GlcNAc...) asparagine glycosylation is found at Asn-153 and Asn-160. Low complexity predominate over residues 199-226 (TKISDDSSSSSSIPSTTSSTGSIPIPSS). Residues 199-246 (TKISDDSSSSSSIPSTTSSTGSIPIPSSATQTPPSPNIASDSTRNLPN) are disordered. A compositionally biased stretch (polar residues) spans 227–246 (ATQTPPSPNIASDSTRNLPN). N-linked (GlcNAc...) asparagine glycans are attached at residues Asn-246, Asn-283, and Asn-287. Positions 250–384 (PVNRFNIFES…IAVHGFNQMI (135 aa)) constitute an FAS1 2 domain. Positions 405-424 (QEEEGVHGEYSSELGDYGLH) are disordered.

Belongs to the fasciclin-like AGP family.

The protein resides in the membrane. Functionally, may be a cell surface adhesion protein. This Arabidopsis thaliana (Mouse-ear cress) protein is Putative fasciclin-like arabinogalactan protein 20 (FLA20).